A 1036-amino-acid polypeptide reads, in one-letter code: Phospholipase D1 (1036 aa).

The region spanning 81 to 212 is the PX domain; it reads IKAQVLEVER…TEFLDVSQLS (132 aa). A PH domain is found at 219-328; it reads PKGLEGMIMK…WGGAIEEFIQ (110 aa). S-palmitoyl cysteine attachment occurs at residues cysteine 240 and cysteine 241. In terms of domain architecture, PLD phosphodiesterase 1 spans 459–486; that stretch reads YLWAHHEKLVIIDQSVAFVGGIDLAYGR. Positions 463-890 are catalytic; it reads HHEKLVIIDQ…MLGKRDSEMA (428 aa). 3 positions are modified to phosphoserine: serine 499, serine 561, and serine 591. In terms of domain architecture, PLD phosphodiesterase 2 spans 853-880; that stretch reads ELIYVHSKLLIADDNTVIIGSANINDRS.

This sequence belongs to the phospholipase D family. As to quaternary structure, interacts with PIP5K1B.

It is found in the cytoplasm. The protein resides in the perinuclear region. It localises to the endoplasmic reticulum membrane. Its subcellular location is the golgi apparatus membrane. The protein localises to the late endosome membrane. The enzyme catalyses a 1,2-diacyl-sn-glycero-3-phosphocholine + H2O = a 1,2-diacyl-sn-glycero-3-phosphate + choline + H(+). Its activity is regulated as follows. Stimulated by phosphatidylinositol 4,5-bisphosphate and phosphatidylinositol 3,4,5-trisphosphate, activated by the phosphokinase C-alpha, by the ADP-ribosylation factor-1 (ARF-1), and to a lesser extent by GTP-binding proteins: RHO A, RAC-1 and CDC42. Implicated as a critical step in numerous cellular pathways, including signal transduction, membrane trafficking, and the regulation of mitosis. May be involved in the regulation of perinuclear intravesicular membrane traffic. The protein is Phospholipase D1 (PLD1) of Cricetulus griseus (Chinese hamster).